A 180-amino-acid polypeptide reads, in one-letter code: Putative 3-methyladenine DNA glycosylase (180 aa).

Belongs to the DNA glycosylase MPG family.

In Ehrlichia chaffeensis (strain ATCC CRL-10679 / Arkansas), this protein is Putative 3-methyladenine DNA glycosylase.